The following is a 411-amino-acid chain: Serine/threonine transporter SstT (411 aa).

9 helical membrane passes run 14–34 (GSLVIQIIVGIVAGILLASVA), 43–63 (FLGGLFVSALKAVAPILVFIL), 82–102 (IIMLYLFGTLMAALTAVVMSF), 141–161 (ALMSGNFIGILAWAIALGFAL), 192–212 (IGIFGLVANTFAETGFAALAG), 218–238 (AVLLGSMAVIALVVNPAIVFF), 290–310 (IPLGATINMAGAAITITVLTL), 330–350 (VVAAVSACGASGVAGGSLLLI), and 357–377 (FGIPNEVAMQVVAVGFIIGVI).

The protein belongs to the dicarboxylate/amino acid:cation symporter (DAACS) (TC 2.A.23) family.

The protein localises to the cell inner membrane. It carries out the reaction L-serine(in) + Na(+)(in) = L-serine(out) + Na(+)(out). It catalyses the reaction L-threonine(in) + Na(+)(in) = L-threonine(out) + Na(+)(out). In terms of biological role, involved in the import of serine and threonine into the cell, with the concomitant import of sodium (symport system). The polypeptide is Serine/threonine transporter SstT (Photobacterium profundum (strain SS9)).